The chain runs to 287 residues: Pyridoxal 5'-phosphate synthase subunit PdxS (287 aa).

Asp-21 provides a ligand contact to D-ribose 5-phosphate. The active-site Schiff-base intermediate with D-ribose 5-phosphate is Lys-78. Gly-150 is a binding site for D-ribose 5-phosphate. Arg-162 contacts D-glyceraldehyde 3-phosphate. D-ribose 5-phosphate-binding positions include Gly-211 and 232 to 233 (GS).

The protein belongs to the PdxS/SNZ family. In terms of assembly, in the presence of PdxT, forms a dodecamer of heterodimers.

The enzyme catalyses aldehydo-D-ribose 5-phosphate + D-glyceraldehyde 3-phosphate + L-glutamine = pyridoxal 5'-phosphate + L-glutamate + phosphate + 3 H2O + H(+). Its pathway is cofactor biosynthesis; pyridoxal 5'-phosphate biosynthesis. In terms of biological role, catalyzes the formation of pyridoxal 5'-phosphate from ribose 5-phosphate (RBP), glyceraldehyde 3-phosphate (G3P) and ammonia. The ammonia is provided by the PdxT subunit. Can also use ribulose 5-phosphate and dihydroxyacetone phosphate as substrates, resulting from enzyme-catalyzed isomerization of RBP and G3P, respectively. This Francisella tularensis subsp. tularensis (strain FSC 198) protein is Pyridoxal 5'-phosphate synthase subunit PdxS.